We begin with the raw amino-acid sequence, 222 residues long: Large ribosomal subunit protein uL4 (222 aa).

This sequence belongs to the universal ribosomal protein uL4 family. Part of the 50S ribosomal subunit.

One of the primary rRNA binding proteins, this protein initially binds near the 5'-end of the 23S rRNA. It is important during the early stages of 50S assembly. It makes multiple contacts with different domains of the 23S rRNA in the assembled 50S subunit and ribosome. Its function is as follows. Forms part of the polypeptide exit tunnel. The chain is Large ribosomal subunit protein uL4 from Chlamydia trachomatis serovar L2 (strain ATCC VR-902B / DSM 19102 / 434/Bu).